The sequence spans 587 residues: Glutaconyl-CoA decarboxylase subunit alpha (587 aa).

One can recognise a CoA carboxyltransferase N-terminal domain in the interval Leu-31–Asp-298. Positions Leu-31–Ala-558 are carboxyltransferase. The CoA carboxyltransferase C-terminal domain maps to Arg-295–Ala-558.

Heterooctamer consisting of two alpha, two beta, two gamma and two delta subunits.

The catalysed reaction is (2E)-glutaconyl-CoA + Na(+)(in) + H(+) = (2E)-butenoyl-CoA + Na(+)(out) + CO2. It participates in amino-acid degradation; L-glutamate degradation via hydroxyglutarate pathway; crotonoyl-CoA from L-glutamate: step 5/5. Its function is as follows. Decarboxylase subunit of the primary sodium pump glutaconyl-CoA decarboxylase (GCD). The protein is Glutaconyl-CoA decarboxylase subunit alpha (gcdA) of Acidaminococcus fermentans (strain ATCC 25085 / DSM 20731 / CCUG 9996 / CIP 106432 / VR4).